Reading from the N-terminus, the 309-residue chain is MEDQMNYYRFSREQWKQFYRNNQHQVPLTAANLHEIEAFNDRISLDDVRDIYMPFAHLLQAKYEHYLSWRETESVFLHRQNRQSPFIIGVSGSVAVGKTTTARLLEILFKYLYPDRRTQLITTDGFLYPNAELKKMQLMERKGFPESYDMTRLIQFLNDVKSGKPLAKAPVYSHQTYDIVPNRFDVITHPDILIIEGINVLQLPSNQAIYISDFTDFSVYVDADADLIEDWYLERFKALMKTAFQDPTNYFYPWAIGDPKDAMAMAERVWEEVNLKNLNDYILPTRNRADLILHKVAHHVIDAVYFRKY.

Position 92-99 (92-99 (GSVAVGKT)) interacts with ATP.

This sequence belongs to the prokaryotic pantothenate kinase family.

Its subcellular location is the cytoplasm. The catalysed reaction is (R)-pantothenate + ATP = (R)-4'-phosphopantothenate + ADP + H(+). It participates in cofactor biosynthesis; coenzyme A biosynthesis; CoA from (R)-pantothenate: step 1/5. The protein is Pantothenate kinase (coaA) of Lactiplantibacillus plantarum (strain ATCC BAA-793 / NCIMB 8826 / WCFS1) (Lactobacillus plantarum).